The chain runs to 372 residues: Alanine dehydrogenase 2 (372 aa).

The active site involves His-95. NAD(+) is bound at residue 169-199; it reads KVTIIGGGQAGTNAAKIALGLGADVTILDVN.

The protein belongs to the AlaDH/PNT family.

The enzyme catalyses L-alanine + NAD(+) + H2O = pyruvate + NH4(+) + NADH + H(+). It participates in amino-acid degradation; L-alanine degradation via dehydrogenase pathway; NH(3) and pyruvate from L-alanine: step 1/1. Functionally, may play a role in cell wall synthesis as L-alanine is an important constituent of the peptidoglycan layer. This chain is Alanine dehydrogenase 2 (ald2), found in Staphylococcus aureus (strain COL).